The sequence spans 337 residues: Pyridoxal 5'-phosphate synthase subunit PdxS (337 aa).

D-ribose 5-phosphate is bound at residue Asp-65. Lys-122 functions as the Schiff-base intermediate with D-ribose 5-phosphate in the catalytic mechanism. Position 194 (Gly-194) interacts with D-ribose 5-phosphate. Lys-206 contributes to the D-glyceraldehyde 3-phosphate binding site. D-ribose 5-phosphate-binding positions include Gly-255 and 276-277 (GS).

The protein belongs to the PdxS/SNZ family. In terms of assembly, in the presence of PdxT, forms a dodecamer of heterodimers.

The enzyme catalyses aldehydo-D-ribose 5-phosphate + D-glyceraldehyde 3-phosphate + L-glutamine = pyridoxal 5'-phosphate + L-glutamate + phosphate + 3 H2O + H(+). Its pathway is cofactor biosynthesis; pyridoxal 5'-phosphate biosynthesis. Functionally, catalyzes the formation of pyridoxal 5'-phosphate from ribose 5-phosphate (RBP), glyceraldehyde 3-phosphate (G3P) and ammonia. The ammonia is provided by the PdxT subunit. Can also use ribulose 5-phosphate and dihydroxyacetone phosphate as substrates, resulting from enzyme-catalyzed isomerization of RBP and G3P, respectively. The protein is Pyridoxal 5'-phosphate synthase subunit PdxS of Metallosphaera sedula (strain ATCC 51363 / DSM 5348 / JCM 9185 / NBRC 15509 / TH2).